A 367-amino-acid polypeptide reads, in one-letter code: Carbamoyl-phosphate synthase (367 aa).

The ATP-grasp domain occupies K111 to A296. K137–S186 lines the ATP pocket. Residues D253, E267, and N269 each coordinate Mg(2+). D253, E267, and N269 together coordinate Mn(2+).

Belongs to the small carbamoyl-phosphate synthase family. In terms of assembly, forms homodimers and homotetramers (dimers of dimers). The cofactor is Mg(2+). Requires Mn(2+) as cofactor.

It carries out the reaction hydrogencarbonate + NH4(+) + 2 ATP = carbamoyl phosphate + 2 ADP + phosphate + 2 H(+). Its function is as follows. Catalyzes the synthesis of carbamoyl phosphate from ATP, ammonium and bicarbonate. Proceeds via a three-step mechanism, i.e. the phosphorylation of hydrogencarbonate to carboxyphosphate, a nucleophilic attack of ammonia on carboxyphosphate yielding carbamate, and the phosphorylation of carbamate forming carbamoyl phosphate. In M.smithii, the predominant archaeon in the human gut, one function of this enzyme may be to sequester ammonia, a scarce nutrient in the intestine which is the major source of nitrogen in M.smithii for the biosynthesis of nucleotides, amino acids, and many other metabolites. In Methanobrevibacter smithii (strain ATCC 35061 / DSM 861 / OCM 144 / PS), this protein is Carbamoyl-phosphate synthase.